A 957-amino-acid chain; its full sequence is Collagen alpha-1(XXI) chain (957 aa).

A signal peptide spans 1–22; it reads MAHYITFLCMVLVLLLQNSVLA. A VWFA domain is found at 37 to 211; the sequence is DLVFILDGSY…KIREVMKQKL (175 aa). An N-linked (GlcNAc...) asparagine glycan is attached at Asn-62. In terms of domain architecture, Laminin G-like spans 230–412; it reads GFDILLGLDV…VQKLRIYCDP (183 aa). 3 consecutive Collagen-like domains span residues 448–500, 501–542, and 543–594; these read PGKP…GARG, LPGY…GDKG, and SPGF…SPGA. Disordered regions lie at residues 448-786 and 825-938; these read PGKP…KPGR and GSPG…ICDP. Low complexity-rich tracts occupy residues 451–462 and 471–481; these read PGLQGPKGDPGL and QPGQDGKPGYQ. The span at 507–517 shows a compositional bias: basic and acidic residues; sequence EPGRDGDKGDR. 2 stretches are compositionally biased toward low complexity: residues 618 to 637 and 705 to 729; these read QKGE…PGMP and EKGI…IQGH. Collagen-like domains follow at residues 681 to 733, 734 to 787, 825 to 882, and 884 to 934; these read SPGE…HGAK, GERG…PGRE, GSPG…GSQG, and GYPG…GPPG. The span at 732 to 742 shows a compositional bias: basic and acidic residues; sequence AKGERGEKGEP. The span at 829-838 shows a compositional bias: pro residues; the sequence is IPGPPGPIGP. Residues 839-874 are compositionally biased toward low complexity; that stretch reads EGPRGLPGLPGRDGVPGLVGVPGRPGVRGLKGLPGR. Pro residues predominate over residues 889–900; the sequence is QGPPGPPGPEGP.

The protein belongs to the fibril-associated collagens with interrupted helices (FACIT) family. As to expression, highly expressed in lymph node, jejunum, pancreas, stomach, trachea, testis, uterus and placenta; moderately expressed in brain, colon, lung, prostate, spinal cord, salivary gland and vascular smooth-muscle cells and very weakly expressed in heart, liver, kidney, bone marrow, spleen, thymus, skeletal muscle, adrenal gland and peripheral leukocytes. Expression in heart was higher in the right ventricle and atrium than in the left ventricle and atrium.

The protein localises to the secreted. Its subcellular location is the extracellular space. It is found in the extracellular matrix. The protein resides in the cytoplasm. In Homo sapiens (Human), this protein is Collagen alpha-1(XXI) chain (COL21A1).